Here is a 2395-residue protein sequence, read N- to C-terminus: Helicase ssl-1 (2395 aa).

Residues 1–12 (MPATPVRASSTR) are compositionally biased toward low complexity. A disordered region spans residues 1–62 (MPATPVRASS…EKKKKKTSDD (62 aa)). Positions 227-300 (LPKCVEPERN…IKEKRKMCAG (74 aa)) constitute an HSA domain. Over residues 354–363 (LVSSSKSPSI) the composition is skewed to polar residues. Disordered stretches follow at residues 354–404 (LVSS…VRQE) and 444–504 (EKLE…HGVL). Basic and acidic residues-rich tracts occupy residues 365–375 (SDRDDKDEEFK), 394–404 (KSQKKEDVRQE), and 444–462 (EKLEEQKARKEACGDNEEK). Residues 388 to 464 (TIANAEKSQK…ACGDNEEKME (77 aa)) are a coiled coil. The segment covering 470-490 (SSDAQKPSTSSSDLTAEQLQD) has biased composition (polar residues). Positions 570 to 735 (VTLYEKNLNG…WSLMHFLMPT (166 aa)) constitute a Helicase ATP-binding domain. 583 to 590 (DEMGLGKT) is an ATP binding site. Positions 963 to 982 (AQPLQNGNSIPQNAPNRPQT) are disordered. In terms of domain architecture, Helicase C-terminal spans 1196–1342 (LLRQLYLYKH…ELAIDEAGFT (147 aa)). Residues 1452-1476 (KPEFEEECKEAEALIDQKREEWDKN) adopt a coiled-coil conformation. 5 disordered regions span residues 1615–1706 (ESAA…EEPD), 1977–2073 (SIQH…RRNA), 2092–2143 (QSGK…PQQR), 2276–2306 (QMRSNNGGGVGGQGGLQGGPGGPQGIRRPLV), and 2350–2395 (MQMP…PPQN). 2 stretches are compositionally biased toward low complexity: residues 1647-1669 (QQPTTTATTTTTVPQQQQQQQQQ) and 1981-1995 (LQSSSTGLGSQQNLQ). Polar residues predominate over residues 1996-2019 (NSHNSEQRNNVQNMHQNQYNSSQN). Composition is skewed to low complexity over residues 2051–2073 (LVQQGSQQQQQQQQQATLQRRNA) and 2092–2114 (QSGKNCGQGQSFVVMGSQSSSND). The segment covering 2115 to 2129 (GQGGASTVGGGGGGS) has biased composition (gly residues). A compositionally biased stretch (low complexity) spans 2130-2142 (QQPHQQQQQQPQQ). Residues 2281 to 2299 (NGGGVGGQGGLQGGPGGPQ) are compositionally biased toward gly residues. The span at 2361-2377 (QQQAPPQSSQQASQQAP) shows a compositional bias: low complexity.

The protein belongs to the SNF2/RAD54 helicase family. SWR1 subfamily.

The protein localises to the nucleus. Probable catalytic component of a chromatin-remodeling complex which mediates the ATP-dependent exchange of histone H2A variant H2AV/htz-1 for H2A, leading to transcriptional regulation of selected genes by chromatin remodeling. Involved in foregut development, and may be involved in vulval development. The protein is Helicase ssl-1 (ssl-1) of Caenorhabditis elegans.